Reading from the N-terminus, the 968-residue chain is uncharacterized protein (968 aa).

Residues 1-27 (MHSWKKKLVVSQLALACTLAITSQANA) form the signal peptide. Residues 703 to 968 (GLADNGGAWV…SANVGVKYTW (266 aa)) enclose the Autotransporter domain.

This is an uncharacterized protein from Escherichia coli (strain K12).